Here is a 626-residue protein sequence, read N- to C-terminus: ATP-dependent RNA helicase dbp-8 (626 aa).

Over residues 1–25 the composition is skewed to low complexity; the sequence is MPSATAAKAKKANANANLKSKVNKA. The disordered stretch occupies residues 1-183; sequence MPSATAAKAK…ATPALPVPEP (183 aa). The span at 40-98 shows a compositional bias: acidic residues; that stretch reads DESDFGSELDVEDESAASDEEDEDEDEDEHDLEEGVSDEGEGVSDEEEGVSDEDEDEEN. Residues 161 to 173 are compositionally biased toward basic and acidic residues; the sequence is KQAEAPKTEKTEE. The short motif at 195–223 is the Q motif element; it reads TTFDALNVRPWLVQSLANMAIKRPTGIQK. A Helicase ATP-binding domain is found at 226-406; the sequence is IPEILKGRDC…ERPPIPGRAP (181 aa). 239–246 is an ATP binding site; that stretch reads SRTGSGKT. Residues 348-351 carry the DEAD box motif; it reads DEAD. The 152-residue stretch at 438–589 folds into the Helicase C-terminal domain; the sequence is YLHMFLLTPQ…GVNLETRVIR (152 aa).

It belongs to the DEAD box helicase family. DDX49/DBP8 subfamily.

It is found in the nucleus. Its subcellular location is the nucleolus. It catalyses the reaction ATP + H2O = ADP + phosphate + H(+). ATP-binding RNA helicase involved in 40S ribosomal subunit biogenesis and is required for the normal formation of 18S rRNAs through pre-rRNA processing at A0, A1 and A2 sites. Required for vegetative growth. The chain is ATP-dependent RNA helicase dbp-8 (dbp-8) from Neurospora crassa (strain ATCC 24698 / 74-OR23-1A / CBS 708.71 / DSM 1257 / FGSC 987).